A 204-amino-acid chain; its full sequence is ATP phosphoribosyltransferase (204 aa).

It belongs to the ATP phosphoribosyltransferase family. Short subfamily. As to quaternary structure, heteromultimer composed of HisG and HisZ subunits.

The protein localises to the cytoplasm. The enzyme catalyses 1-(5-phospho-beta-D-ribosyl)-ATP + diphosphate = 5-phospho-alpha-D-ribose 1-diphosphate + ATP. Its pathway is amino-acid biosynthesis; L-histidine biosynthesis; L-histidine from 5-phospho-alpha-D-ribose 1-diphosphate: step 1/9. Functionally, catalyzes the condensation of ATP and 5-phosphoribose 1-diphosphate to form N'-(5'-phosphoribosyl)-ATP (PR-ATP). Has a crucial role in the pathway because the rate of histidine biosynthesis seems to be controlled primarily by regulation of HisG enzymatic activity. This chain is ATP phosphoribosyltransferase, found in Staphylococcus aureus (strain MRSA252).